The sequence spans 179 residues: Large ribosomal subunit protein uL5 (179 aa).

This sequence belongs to the universal ribosomal protein uL5 family. As to quaternary structure, part of the 50S ribosomal subunit; part of the 5S rRNA/L5/L18/L25 subcomplex. Contacts the 5S rRNA and the P site tRNA. Forms a bridge to the 30S subunit in the 70S ribosome.

This is one of the proteins that bind and probably mediate the attachment of the 5S RNA into the large ribosomal subunit, where it forms part of the central protuberance. In the 70S ribosome it contacts protein S13 of the 30S subunit (bridge B1b), connecting the 2 subunits; this bridge is implicated in subunit movement. Contacts the P site tRNA; the 5S rRNA and some of its associated proteins might help stabilize positioning of ribosome-bound tRNAs. This chain is Large ribosomal subunit protein uL5, found in Desulfotalea psychrophila (strain LSv54 / DSM 12343).